The following is a 134-amino-acid chain: Protein NrdI (134 aa).

The protein belongs to the NrdI family.

Functionally, probably involved in ribonucleotide reductase function. The sequence is that of Protein NrdI from Serratia proteamaculans (strain 568).